A 397-amino-acid polypeptide reads, in one-letter code: Lysophospholipid transporter LplT (397 aa).

The Periplasmic segment spans residues 1–17; the sequence is MSESVHTNTSLWSKGMK. Residues 18–38 traverse the membrane as a helical segment; the sequence is AVIVAQFLSAFGDNALLFATL. The Cytoplasmic portion of the chain corresponds to 39–52; sequence ALLKAQFYPEWSQP. The helical transmembrane segment at 53–73 threads the bilayer; sequence ILQMVFVGAYILFAPFVGQVA. Topologically, residues 74-90 are periplasmic; that stretch reads DSFAKGRVMMFANGLKL. The helical transmembrane segment at 91 to 111 threads the bilayer; it reads LGAASICFGINPFLGYTLVGV. The Cytoplasmic portion of the chain corresponds to 112-144; the sequence is GAAAYSPAKYGILGELTTGSKLVKANGLMEAST. The chain crosses the membrane as a helical span at residues 145–165; the sequence is IAAILLGSVAGGVLADWHILV. A topological domain (periplasmic) is located at residue alanine 166. The helical transmembrane segment at 167-187 threads the bilayer; sequence LAACALAYGGAVVANIYIPKL. Residues 188 to 226 lie on the Cytoplasmic side of the membrane; it reads AAARPGQSWNLISMTRSFLNACTSLWRNGETRFSLVGTS. A helical membrane pass occupies residues 227–247; sequence LFWGAGVTLRFLLVLWVPVAL. The Periplasmic segment spans residues 248 to 256; the sequence is GITDNATPT. A helical membrane pass occupies residues 257–277; that stretch reads YLNAMVAIGIVVGAGAAAKLV. The Cytoplasmic portion of the chain corresponds to 278–280; that stretch reads TLE. Residues 281–301 form a helical membrane-spanning segment; sequence TVSRCMPAGILIGVVVLIFSL. The Periplasmic segment spans residues 302 to 304; sequence QHE. The helical transmembrane segment at 305–325 threads the bilayer; it reads LLPAYALLMLIGVLGGFFVVP. The Cytoplasmic segment spans residues 326 to 343; it reads LNALLQERGKKSVGAGNA. A helical membrane pass occupies residues 344 to 364; the sequence is IAVQNLGENSAMLLMLGIYSL. Topologically, residues 365 to 366 are periplasmic; it reads AV. A helical transmembrane segment spans residues 367-387; it reads MVGIPVVPIGIGFGALFALAI. The Cytoplasmic portion of the chain corresponds to 388–397; the sequence is TALWIWQRRH.

It belongs to the major facilitator superfamily. LplT (TC 2.A.1.42) family.

Its subcellular location is the cell inner membrane. Functionally, catalyzes the facilitated diffusion of 2-acyl-glycero-3-phosphoethanolamine (2-acyl-GPE) into the cell. In Escherichia coli O6:K15:H31 (strain 536 / UPEC), this protein is Lysophospholipid transporter LplT.